The following is a 545-amino-acid chain: Glucose-6-phosphate isomerase (545 aa).

Residue Glu-351 is the Proton donor of the active site. Catalysis depends on residues His-382 and Lys-510.

It belongs to the GPI family.

The protein resides in the cytoplasm. It catalyses the reaction alpha-D-glucose 6-phosphate = beta-D-fructose 6-phosphate. The protein operates within carbohydrate biosynthesis; gluconeogenesis. It participates in carbohydrate degradation; glycolysis; D-glyceraldehyde 3-phosphate and glycerone phosphate from D-glucose: step 2/4. Functionally, catalyzes the reversible isomerization of glucose-6-phosphate to fructose-6-phosphate. The sequence is that of Glucose-6-phosphate isomerase from Helicobacter acinonychis (strain Sheeba).